A 1124-amino-acid chain; its full sequence is Phytochrome A1 (1124 aa).

Over residues 1 to 14 (MSSSRPSQSSTTSA) the composition is skewed to low complexity. Residues 1–20 (MSSSRPSQSSTTSARSKHSA) are disordered. The region spanning 218–401 (SMERLCDTMV…VFAIHVNKEL (184 aa)) is the GAF domain. Cys-323 contacts phytochromobilin. The PAS 1 domain maps to 617-687 (VTAEMVRLIE…KMLELALQGK (71 aa)). One can recognise a PAC domain in the interval 690–746 (RNVEFEIKTHGPSGDSSPISLIVNACASRDVGDSVVGVCFIAQDITGQKNIMDKFTR). One can recognise a PAS 2 domain in the interval 747 to 821 (IEGDYRAIIQ…KNQEAFVNFG (75 aa)). One can recognise a Histidine kinase domain in the interval 901–1118 (YIRRQIRNPL…TFIISVELAV (218 aa)).

The protein belongs to the phytochrome family. Homodimer. Post-translationally, contains one covalently linked phytochromobilin chromophore.

Its function is as follows. Regulatory photoreceptor which exists in two forms that are reversibly interconvertible by light: the Pr form that absorbs maximally in the red region of the spectrum and the Pfr form that absorbs maximally in the far-red region. Photoconversion of Pr to Pfr induces an array of morphogenic responses, whereas reconversion of Pfr to Pr cancels the induction of those responses. Pfr controls the expression of a number of nuclear genes including those encoding the small subunit of ribulose-bisphosphate carboxylase, chlorophyll A/B binding protein, protochlorophyllide reductase, rRNA, etc. It also controls the expression of its own gene(s) in a negative feedback fashion. The protein is Phytochrome A1 (PHYA1) of Nicotiana tabacum (Common tobacco).